Reading from the N-terminus, the 201-residue chain is Probable phosphopantothenoylcysteine decarboxylase (201 aa).

FMN is bound by residues 20–22 (GSV), 45–47 (SKS), 98–101 (SANT), and Ala-132. Residues Asn-134 and 164–166 (KLA) contribute to the substrate site. The Proton donor role is filled by Cys-167. Substrate is bound at residue Met-175.

This sequence belongs to the HFCD (homooligomeric flavin containing Cys decarboxylase) superfamily. As to quaternary structure, homotrimer. Requires FMN as cofactor. In terms of tissue distribution, expressed in roots, shoots, leaves, flowers, developing siliques and seeds.

The enzyme catalyses N-[(R)-4-phosphopantothenoyl]-L-cysteine + H(+) = (R)-4'-phosphopantetheine + CO2. Its pathway is cofactor biosynthesis; coenzyme A biosynthesis; CoA from (R)-pantothenate: step 3/5. In terms of biological role, involved in plant growth and salt and osmotic tolerance. Catalyzes the decarboxylation of 4'-phosphopantothenoylcysteine to 4'-phosphopantetheine, a key step in coenzyme A biosynthesis. The enzyme is also able to decarboxylate pantothenoylcysteine to pantothenoylcysteamine. This is Probable phosphopantothenoylcysteine decarboxylase (HAL3B) from Arabidopsis thaliana (Mouse-ear cress).